The chain runs to 516 residues: L-amino-acid oxidase (516 aa).

A signal peptide spans 1 to 18 (MNVFFMFSLLFLAALGSC). A disulfide bridge connects residues C28 and C189. FAD contacts are provided by residues 61 to 62 (MS), 81 to 82 (EA), R89, and 103 to 106 (GPMR). The substrate site is built by R106 and H239. FAD is bound at residue V279. C349 and C430 are joined by a disulfide. A glycan (N-linked (GlcNAc...) asparagine) is linked at N379. Position 390 (Y390) interacts with substrate. FAD contacts are provided by residues E475 and 482–487 (GWIDST). Position 482-483 (482-483 (GW)) interacts with substrate.

Belongs to the flavin monoamine oxidase family. FIG1 subfamily. In terms of assembly, homodimer; non-covalently linked. Requires FAD as cofactor. N-glycosylated. Expressed by the venom gland.

It is found in the secreted. It carries out the reaction an L-alpha-amino acid + O2 + H2O = a 2-oxocarboxylate + H2O2 + NH4(+). Functionally, catalyzes an oxidative deamination of predominantly hydrophobic and aromatic L-amino acids, thus producing hydrogen peroxide that may contribute to the diverse toxic effects of this enzyme. Exhibits diverse biological activities, such as hemorrhage, hemolysis, edema, apoptosis of vascular endothelial cells or tumor cell lines, antibacterial and antiparasitic activities, as well as regulation of platelet aggregation. Effects of snake L-amino oxidases on platelets are controversial, since they either induce aggregation or inhibit agonist-induced aggregation. These different effects are probably due to different experimental conditions. The protein is L-amino-acid oxidase of Sistrurus catenatus edwardsii (Desert massasauga).